Reading from the N-terminus, the 172-residue chain is Signal peptidase complex catalytic subunit SEC11 (172 aa).

Residues 1 to 14 (MLSSLQNPRQAAAQ) are Cytoplasmic-facing. The helical; Signal-anchor for type II membrane protein transmembrane segment at 15 to 35 (LMNFAMILSTAFMMWKGLSVA) threads the bilayer. Residues 36 to 172 (TDSPSPIVVV…MGLLVVIQRE (137 aa)) lie on the Lumenal side of the membrane. Active-site charge relay system residues include S49, H90, and D115. The interval 158-169 (VMLGIMGLLVVI) is C-terminal short (CTS) helix.

Belongs to the peptidase S26B family. In terms of assembly, component of the signal peptidase complex (SPC) composed of a catalytic subunit SEC11 and three accessory subunits SPC1, SPC2 and SPC3. The complex induces a local thinning of the ER membrane which is used to measure the length of the signal peptide (SP) h-region of protein substrates. This ensures the selectivity of the complex towards h-regions shorter than 18-20 amino acids. SPC associates with the translocon complex.

The protein resides in the endoplasmic reticulum membrane. It carries out the reaction Cleavage of hydrophobic, N-terminal signal or leader sequences from secreted and periplasmic proteins.. Its function is as follows. Catalytic component of the signal peptidase complex (SPC) which catalyzes the cleavage of N-terminal signal sequences from nascent proteins as they are translocated into the lumen of the endoplasmic reticulum. Specifically cleaves N-terminal signal peptides that contain a hydrophobic alpha-helix (h-region) shorter than 18-20 amino acids. The polypeptide is Signal peptidase complex catalytic subunit SEC11 (SEC11) (Metarhizium robertsii (strain ARSEF 23 / ATCC MYA-3075) (Metarhizium anisopliae (strain ARSEF 23))).